The primary structure comprises 397 residues: S-layer protein B (397 aa).

The N-terminal stretch at 1-24 is a signal peptide; that stretch reads MVVKKTFVLSTLILISVVALVSTA. Positions 259-314 form a coiled coil; that stretch reads INALNNEVSTLRSEISSLNSTIASLNKSLANANTQISNLQSEITTLNSEIGKLNST. Residues 373–393 form a helical membrane-spanning segment; it reads GGIIAGIIGLIVAIVAIVLVM.

It belongs to the Sulfolobales SlaB family. The mushroom-shaped unit cells of the Sulfolobales' S-layers may consist of three SlaB subunits and six SlaA subunits.

It is found in the secreted. The protein resides in the cell wall. It localises to the S-layer. The protein localises to the cell membrane. In terms of biological role, S-layer small protein. May anchor the complex to the cell membrane. The polypeptide is S-layer protein B (Saccharolobus solfataricus (strain ATCC 35092 / DSM 1617 / JCM 11322 / P2) (Sulfolobus solfataricus)).